The following is a 447-amino-acid chain: Tubulin beta chain (447 aa).

Gln11, Glu69, Ser138, Gly142, Thr143, Gly144, Asn204, and Asn226 together coordinate GTP. Position 69 (Glu69) interacts with Mg(2+). The tract at residues 419–447 (VSEYQQYQDATADEEGEYEDEDQEAEDDM) is disordered. Residues 429–447 (TADEEGEYEDEDQEAEDDM) are compositionally biased toward acidic residues.

The protein belongs to the tubulin family. In terms of assembly, dimer of alpha and beta chains. A typical microtubule is a hollow water-filled tube with an outer diameter of 25 nm and an inner diameter of 15 nM. Alpha-beta heterodimers associate head-to-tail to form protofilaments running lengthwise along the microtubule wall with the beta-tubulin subunit facing the microtubule plus end conferring a structural polarity. Microtubules usually have 13 protofilaments but different protofilament numbers can be found in some organisms and specialized cells. Requires Mg(2+) as cofactor.

It is found in the cytoplasm. It localises to the cytoskeleton. Its function is as follows. Tubulin is the major constituent of microtubules, a cylinder consisting of laterally associated linear protofilaments composed of alpha- and beta-tubulin heterodimers. Microtubules grow by the addition of GTP-tubulin dimers to the microtubule end, where a stabilizing cap forms. Below the cap, tubulin dimers are in GDP-bound state, owing to GTPase activity of alpha-tubulin. The protein is Tubulin beta chain (TUBB) of Hordeum vulgare (Barley).